The chain runs to 622 residues: Dehydrogenase xptC (622 aa).

The signal sequence occupies residues 1–18 (MAKLSVILLFRSLLLCGA). Residues 47–48 (VS), 68–69 (EA), and 123–126 (NAMI) each bind FAD. Residues N160, N173, N357, N364, and N480 are each glycosylated (N-linked (GlcNAc...) asparagine). 598–599 (PM) contributes to the FAD binding site.

Belongs to the GMC oxidoreductase family. In terms of assembly, homodimer. FAD serves as cofactor.

The protein operates within secondary metabolite biosynthesis. Its function is as follows. Dehydrogenase involved in the conversion of monodictyphenone to the prenyl xanthones such as emericellin, shamixanthone and epishamixanthone. Monodictyphenone is first converted to variecoxanthone A via a paeciloxanthone intermediate by the consecutive actions of the FAD-dependent monooxygenase mdpD and the xanthone prenyltransferase xptB. XptB catalyzes regular O-prenylation at the hydroxy group of C-7 of the xanthone ring. Variecoxanthone A is further prenylated to emericellin by xptA before being reduced to shamixanthone and epishamixanthone by the dehydrogenase xptC. This is Dehydrogenase xptC from Emericella nidulans (strain FGSC A4 / ATCC 38163 / CBS 112.46 / NRRL 194 / M139) (Aspergillus nidulans).